Reading from the N-terminus, the 422-residue chain is MIIKRTPQAASPLASWLSYLENLHSKTIDLGLERVSLVAARLGVLKPAPFVFTVAGTNGKGTTCRTLESILMAAGYKVGVYSSPHLVRYTERVRVQGQELPESAHTASFAEIESARGDISLTYFEYGTLSALWLFKQAQLDVVILEVGLGGRLDATNIVDADVAVVTSIALDHTDWLGPDRESIGREKAGIFRSEKPAIVGEPEMPSTIADVAQEKGALLQRRGVEWNYSVTDHDWAFSDAHGTLENLPLPLVPQPNAATALAALRASGLEVSENAIRDGIASAILPGRFQIVSESPRVIFDVAHNPHAAEYLTGRMKALPKNGRVLAVIGMLHDKDIAGTLAWLKSVVDDWYCAPLEGPRGATAEQLLEHLGNGKSFDSVAQAWDAAMADAKAEDTVLVCGSFHTVAHVMEVIDARRSGGK.

29 to 31 (DLG) provides a ligand contact to 7,8-dihydropteroate. 59–62 (GKGT) contacts ATP. Position 83 (serine 83) interacts with Mg(2+). 122–125 (TYFE) is a 7,8-dihydropteroate binding site. Glutamate 146 lines the Mg(2+) pocket. Residue 153–155 (LDA) participates in 7,8-dihydropteroate binding. Histidine 173 provides a ligand contact to Mg(2+). Residue lysine 188 is modified to N6-carboxylysine. Residues asparagine 257, arginine 289, and aspartate 302 each coordinate ATP.

Belongs to the folylpolyglutamate synthase family. Monomer. Mg(2+) serves as cofactor.

It catalyses the reaction 7,8-dihydropteroate + L-glutamate + ATP = 7,8-dihydrofolate + ADP + phosphate + H(+). The catalysed reaction is (6S)-5,6,7,8-tetrahydrofolyl-(gamma-L-Glu)(n) + L-glutamate + ATP = (6S)-5,6,7,8-tetrahydrofolyl-(gamma-L-Glu)(n+1) + ADP + phosphate + H(+). The enzyme catalyses 10-formyltetrahydrofolyl-(gamma-L-Glu)(n) + L-glutamate + ATP = 10-formyltetrahydrofolyl-(gamma-L-Glu)(n+1) + ADP + phosphate + H(+). It carries out the reaction (6R)-5,10-methylenetetrahydrofolyl-(gamma-L-Glu)(n) + L-glutamate + ATP = (6R)-5,10-methylenetetrahydrofolyl-(gamma-L-Glu)(n+1) + ADP + phosphate + H(+). It functions in the pathway cofactor biosynthesis; tetrahydrofolate biosynthesis; 7,8-dihydrofolate from 2-amino-4-hydroxy-6-hydroxymethyl-7,8-dihydropteridine diphosphate and 4-aminobenzoate: step 2/2. Its pathway is cofactor biosynthesis; tetrahydrofolylpolyglutamate biosynthesis. Its function is as follows. Functions in two distinct reactions of the de novo folate biosynthetic pathway. Catalyzes the addition of a glutamate residue to dihydropteroate (7,8-dihydropteroate or H2Pte) to form dihydrofolate (7,8-dihydrofolate monoglutamate or H2Pte-Glu). Also catalyzes successive additions of L-glutamate to tetrahydrofolate or 10-formyltetrahydrofolate or 5,10-methylenetetrahydrofolate, leading to folylpolyglutamate derivatives. The protein is Dihydrofolate synthase/folylpolyglutamate synthase of Escherichia coli (strain K12).